The chain runs to 303 residues: MTHSRTALVLIHPATTTRPELLTAAKQHSSLSGANIEQHLVNKLNDGSLQLQDNSYDVIFYVTPEAADEILFPRRLIGVLAAALRAGGSLHGLYDKYQVDALLSGFDIVREPTYHWQKRAVTASAPVKLAPRQPVSAAGLPRFKRASAPSPAAVTPTLDEVPPAAVDPVKAALLDSAAGDAPIAENDLVVGHDSTPITLLTCGRTQTRRRKACKDCTCGLREENEKEISDTHARQEKLLLGDAVKFSEPELAEIDFTIEGKKVGGCGSCSLGDAFRCSGCPYLGLPAFKPGQPINLSAISDDL.

The tract at residues 1-125 (MTHSRTALVL…WQKRAVTASA (125 aa)) is N-terminal SAM-like domain. The interval 126–188 (PVKLAPRQPV…GDAPIAENDL (63 aa)) is linker. Positions 202, 213, 216, and 218 each coordinate [2Fe-2S] cluster. Residues 202–218 (CGRTQTRRRKACKDCTC) are fe-S binding site A. [4Fe-4S] cluster-binding residues include Cys-266, Cys-269, Cys-277, and Cys-280. 2 short sequence motifs (cx2C motif) span residues 266–269 (CGSC) and 277–280 (CSGC). Positions 266 to 280 (CGSCSLGDAFRCSGC) are fe-S binding site B.

The protein belongs to the anamorsin family. In terms of assembly, monomer. Interacts with TAH18. Interacts with MIA40. [2Fe-2S] cluster serves as cofactor. Requires [4Fe-4S] cluster as cofactor.

It localises to the cytoplasm. The protein resides in the mitochondrion intermembrane space. In terms of biological role, component of the cytosolic iron-sulfur (Fe-S) protein assembly (CIA) machinery required for the maturation of extramitochondrial Fe-S proteins. Part of an electron transfer chain functioning in an early step of cytosolic Fe-S biogenesis, facilitating the de novo assembly of a [4Fe-4S] cluster on the scaffold complex CFD1-NBP35. Electrons are transferred to DRE2 from NADPH via the FAD- and FMN-containing protein TAH18. TAH18-DRE2 are also required for the assembly of the diferric tyrosyl radical cofactor of ribonucleotide reductase (RNR), probably by providing electrons for reduction during radical cofactor maturation in the catalytic small subunit RNR2. This Eremothecium gossypii (strain ATCC 10895 / CBS 109.51 / FGSC 9923 / NRRL Y-1056) (Yeast) protein is Fe-S cluster assembly protein DRE2.